Reading from the N-terminus, the 347-residue chain is Epimerase family protein SDR39U1 homolog, chloroplastic (347 aa).

A chloroplast-targeting transit peptide spans 1 to 37 (MELLCSPTSLSSSFALSSALLVPRSFSMPGTRRFMVL). NADP(+) contacts are provided by residues 54 to 57 (TGFI), 76 to 77 (TR), 115 to 119 (LAGLP), and Arg-136.

In terms of assembly, can form homodimers. As to expression, expressed in leaves, stems and flower buds.

The protein resides in the plastid. It is found in the chloroplast inner membrane. Its subcellular location is the chloroplast. Functionally, putative NADP-dependent oxidoreductase that acts as a positive regulator of chloroplast division. May play a role at an early stage of the division process. The protein is Epimerase family protein SDR39U1 homolog, chloroplastic of Arabidopsis thaliana (Mouse-ear cress).